The chain runs to 643 residues: 1-deoxy-D-xylulose-5-phosphate synthase (643 aa).

Residues H79 and 120-122 (AHA) contribute to the thiamine diphosphate site. D151 provides a ligand contact to Mg(2+). Residues 152–153 (GS), N180, Y287, and E369 contribute to the thiamine diphosphate site. A Mg(2+)-binding site is contributed by N180.

It belongs to the transketolase family. DXPS subfamily. In terms of assembly, homodimer. The cofactor is Mg(2+). It depends on thiamine diphosphate as a cofactor.

The catalysed reaction is D-glyceraldehyde 3-phosphate + pyruvate + H(+) = 1-deoxy-D-xylulose 5-phosphate + CO2. It participates in metabolic intermediate biosynthesis; 1-deoxy-D-xylulose 5-phosphate biosynthesis; 1-deoxy-D-xylulose 5-phosphate from D-glyceraldehyde 3-phosphate and pyruvate: step 1/1. In terms of biological role, catalyzes the acyloin condensation reaction between C atoms 2 and 3 of pyruvate and glyceraldehyde 3-phosphate to yield 1-deoxy-D-xylulose-5-phosphate (DXP). In Maricaulis maris (strain MCS10) (Caulobacter maris), this protein is 1-deoxy-D-xylulose-5-phosphate synthase.